The chain runs to 184 residues: ATP synthase subunit delta (184 aa).

It belongs to the ATPase delta chain family. F-type ATPases have 2 components, F(1) - the catalytic core - and F(0) - the membrane proton channel. F(1) has five subunits: alpha(3), beta(3), gamma(1), delta(1), epsilon(1). F(0) has three main subunits: a(1), b(2) and c(10-14). The alpha and beta chains form an alternating ring which encloses part of the gamma chain. F(1) is attached to F(0) by a central stalk formed by the gamma and epsilon chains, while a peripheral stalk is formed by the delta and b chains.

It is found in the cell membrane. Its function is as follows. F(1)F(0) ATP synthase produces ATP from ADP in the presence of a proton or sodium gradient. F-type ATPases consist of two structural domains, F(1) containing the extramembraneous catalytic core and F(0) containing the membrane proton channel, linked together by a central stalk and a peripheral stalk. During catalysis, ATP synthesis in the catalytic domain of F(1) is coupled via a rotary mechanism of the central stalk subunits to proton translocation. In terms of biological role, this protein is part of the stalk that links CF(0) to CF(1). It either transmits conformational changes from CF(0) to CF(1) or is implicated in proton conduction. In Bacillus licheniformis (strain ATCC 14580 / DSM 13 / JCM 2505 / CCUG 7422 / NBRC 12200 / NCIMB 9375 / NCTC 10341 / NRRL NRS-1264 / Gibson 46), this protein is ATP synthase subunit delta.